The primary structure comprises 318 residues: Aspartate carbamoyltransferase catalytic subunit (318 aa).

2 residues coordinate carbamoyl phosphate: R59 and T60. L-aspartate is bound at residue K87. 3 residues coordinate carbamoyl phosphate: R109, H137, and Q140. The L-aspartate site is built by R170 and R224. The carbamoyl phosphate site is built by G265 and P266.

The protein belongs to the aspartate/ornithine carbamoyltransferase superfamily. ATCase family. In terms of assembly, heterododecamer (2C3:3R2) of six catalytic PyrB chains organized as two trimers (C3), and six regulatory PyrI chains organized as three dimers (R2).

It catalyses the reaction carbamoyl phosphate + L-aspartate = N-carbamoyl-L-aspartate + phosphate + H(+). It participates in pyrimidine metabolism; UMP biosynthesis via de novo pathway; (S)-dihydroorotate from bicarbonate: step 2/3. Functionally, catalyzes the condensation of carbamoyl phosphate and aspartate to form carbamoyl aspartate and inorganic phosphate, the committed step in the de novo pyrimidine nucleotide biosynthesis pathway. In Rhizobium etli (strain ATCC 51251 / DSM 11541 / JCM 21823 / NBRC 15573 / CFN 42), this protein is Aspartate carbamoyltransferase catalytic subunit.